The chain runs to 106 residues: L-rhamnose mutarotase (106 aa).

Y20 serves as a coordination point for substrate. Catalysis depends on H24, which acts as the Proton donor. Substrate is bound by residues Y43 and 78–79 (WW).

It belongs to the rhamnose mutarotase family. In terms of assembly, homodimer.

Its subcellular location is the cytoplasm. It catalyses the reaction alpha-L-rhamnose = beta-L-rhamnose. It functions in the pathway carbohydrate metabolism; L-rhamnose metabolism. Its function is as follows. Involved in the anomeric conversion of L-rhamnose. The sequence is that of L-rhamnose mutarotase from Verminephrobacter eiseniae (strain EF01-2).